The following is a 384-amino-acid chain: Secreted LysM effector LysM14 (384 aa).

An N-terminal signal peptide occupies residues 1–35 (MGWSPRWKVMLRGIFNAMISIHILLSLLFAHIATA). A LysM domain is found at 64 to 112 (YTYTIQEGDTCAKLAQRYQVTTSNIETWNVGSWGWPGCAKIKQGDFVCL). Residues 185 to 220 (STTKSAASKTTTTSNPTTTSKTTITSKPTTTSKPTT) form a disordered region.

It belongs to the secreted LysM effector family.

Its subcellular location is the secreted. Secreted LysM effector that might have a role in sequestration of chitin oligosaccharides (breakdown products of fungal cell walls that are released during invasion and act as triggers of host immunity) to dampen host defense. The protein is Secreted LysM effector LysM14 of Penicillium expansum (Blue mold rot fungus).